Consider the following 281-residue polypeptide: CCAAT/enhancer-binding protein epsilon (281 aa).

The interval 1–30 (MSHGTYYECEPRGGQQPLEFSGGRAGPGEL) is disordered. A Glycyl lysine isopeptide (Lys-Gly) (interchain with G-Cter in SUMO2) cross-link involves residue lysine 121. Residue serine 181 is modified to Phosphoserine. The bZIP domain occupies 204–267 (SLEYRLRRER…DTLRNLFRQI (64 aa)). The segment at 208–245 (RLRRERNNIAVRKSRDKAKRRIMETQQKVLEYMAENER) is basic motif. The interval 246-267 (LRNRVDQLTQELDTLRNLFRQI) is leucine-zipper.

Belongs to the bZIP family. C/EBP subfamily. In terms of assembly, binds DNA as a homodimer and as a heterodimer. Can form stable heterodimers with CEBPA, CEBPB and CEBPD. Interacts with GATA1 and SPI1. Interacts with SMARCD2. Post-translationally, phosphorylated.

It localises to the nucleus. In terms of biological role, transcriptional activator. C/EBP are DNA-binding proteins that recognize two different motifs: the CCAAT homology common to many promoters and the enhanced core homology common to many enhancers. Required for the promyelocyte-myelocyte transition in myeloid differentiation. The polypeptide is CCAAT/enhancer-binding protein epsilon (Cebpe) (Mus musculus (Mouse)).